Here is a 1317-residue protein sequence, read N- to C-terminus: ABC transporter C family member 14 (1317 aa).

One can recognise an ABC transmembrane type-1 1 domain in the interval Asn-119–Gly-404. 5 helical membrane-spanning segments follow: residues Ile-127–Ile-147, Ser-156–Ile-176, Ile-249–Gly-269, Val-341–Ser-361, and Leu-375–Leu-395. The disordered stretch occupies residues Glu-426–Asp-451. Positions Asn-427 to Asn-449 are enriched in low complexity. Positions Glu-490–Ile-710 constitute an ABC transporter 1 domain. Position 522-529 (Gly-522–Thr-529) interacts with ATP. 5 consecutive transmembrane segments (helical) span residues Tyr-734–Gly-754, Asp-778–Ile-798, Leu-871–Ile-891, Leu-969–Ser-989, and Gly-992–Val-1012. One can recognise an ABC transmembrane type-1 2 domain in the interval Leu-744–Arg-1027. An ABC transporter 2 domain is found at Ile-1071 to Lys-1306. Residue Gly-1105 to Thr-1112 coordinates ATP.

Belongs to the ABC transporter superfamily. ABCC family. Conjugate transporter (TC 3.A.1.208) subfamily.

The protein localises to the membrane. The chain is ABC transporter C family member 14 (abcC14) from Dictyostelium discoideum (Social amoeba).